Here is a 133-residue protein sequence, read N- to C-terminus: ATP synthase epsilon chain (133 aa).

It belongs to the ATPase epsilon chain family. In terms of assembly, F-type ATPases have 2 components, CF(1) - the catalytic core - and CF(0) - the membrane proton channel. CF(1) has five subunits: alpha(3), beta(3), gamma(1), delta(1), epsilon(1). CF(0) has three main subunits: a, b and c.

The protein localises to the cell inner membrane. In terms of biological role, produces ATP from ADP in the presence of a proton gradient across the membrane. This is ATP synthase epsilon chain from Paramagnetospirillum magneticum (strain ATCC 700264 / AMB-1) (Magnetospirillum magneticum).